Here is a 345-residue protein sequence, read N- to C-terminus: Glycerol-3-phosphate dehydrogenase [NAD(P)+] (345 aa).

Positions 23, 24, 44, and 118 each coordinate NADPH. Residues Lys118, Gly147, and Thr149 each coordinate sn-glycerol 3-phosphate. Ala151 contacts NADPH. Lys203, Asp256, Ser266, Arg267, and Asn268 together coordinate sn-glycerol 3-phosphate. The active-site Proton acceptor is Lys203. Arg267 serves as a coordination point for NADPH. Val291 and Glu293 together coordinate NADPH.

The protein belongs to the NAD-dependent glycerol-3-phosphate dehydrogenase family.

Its subcellular location is the cytoplasm. The enzyme catalyses sn-glycerol 3-phosphate + NAD(+) = dihydroxyacetone phosphate + NADH + H(+). It catalyses the reaction sn-glycerol 3-phosphate + NADP(+) = dihydroxyacetone phosphate + NADPH + H(+). It participates in membrane lipid metabolism; glycerophospholipid metabolism. Its function is as follows. Catalyzes the reduction of the glycolytic intermediate dihydroxyacetone phosphate (DHAP) to sn-glycerol 3-phosphate (G3P), the key precursor for phospholipid synthesis. The chain is Glycerol-3-phosphate dehydrogenase [NAD(P)+] from Vibrio parahaemolyticus serotype O3:K6 (strain RIMD 2210633).